Consider the following 175-residue polypeptide: Interferon a3 (175 aa).

An N-terminal signal peptide occupies residues 1–23 (MYTMQSWSCIFLIICSMQSVCHC). Cysteines 24 and 120 form a disulfide.

Belongs to the alpha/beta interferon family. Isoform 1 and isoform 2 are expressed in several tissues, including gill, spleen, intestine, kidney and skin.

It localises to the secreted. The protein localises to the cytoplasm. The protein resides in the cytosol. In terms of biological role, key player in antiviral response. Induces expression of TLRs, including that of TLR3, TLR9 and TLR8a1, and that of cytosolic pattern recognition receptors, including RIGI, IFIH1/MDA5 and DHX58/LGP2. Also induces MX1 and its own expression. In the presence of intracellular IFNAR2 (iIFNAR2) and IFNAR1B, intracellular isoform 3 may mediate STAT1 and STAT2 phosphorylation and induction of EIF2AK2, MX1 and RSAD2. The polypeptide is Interferon a3 (Oncorhynchus mykiss (Rainbow trout)).